Consider the following 441-residue polypeptide: MSVYAHLSQTPAHPSARIQPVMILAGGTGGHIFPGLAVAKVLRARGVPVTWLGADGAMETRLVPQHDIPIDTLAITGLRGKGMVKLLGAPLRVMRAVRAAGFVLRKRQPRAVISFGGFAAGPGGLAARLLGAPLLVHEQNRAPGMTNKVLSRFARRVLTGFPGSFAGEEAVGNPVRAEIAALPAPADRLVGRTGPVCVLVLGGSQGARVLNQAVPTALAALGHPDVEVRHQCGEKLRAEAEVAYAQASVNASVEPFIADMAAAYAWADLVVCRAGASTLAELCAAGVGSVLVPFAAAVDDHQTRNAEYLVGADAAVLLKQDDSLAVRLQQVLQTLLTDPARRLSMANAARTLAKPDAAERIADIILQEAGTGDRQPPAVEERAGFGIGKEQQHKQDSMQNSVDGQFSGRSTAAVANLQCRSLFDSHRLAILTPGTFAGGAA.

Residues 28–30 (TGG), Asn-140, Arg-176, Ser-204, Ile-257, and Gln-302 each bind UDP-N-acetyl-alpha-D-glucosamine.

This sequence belongs to the glycosyltransferase 28 family. MurG subfamily.

Its subcellular location is the cell inner membrane. The enzyme catalyses di-trans,octa-cis-undecaprenyl diphospho-N-acetyl-alpha-D-muramoyl-L-alanyl-D-glutamyl-meso-2,6-diaminopimeloyl-D-alanyl-D-alanine + UDP-N-acetyl-alpha-D-glucosamine = di-trans,octa-cis-undecaprenyl diphospho-[N-acetyl-alpha-D-glucosaminyl-(1-&gt;4)]-N-acetyl-alpha-D-muramoyl-L-alanyl-D-glutamyl-meso-2,6-diaminopimeloyl-D-alanyl-D-alanine + UDP + H(+). Its pathway is cell wall biogenesis; peptidoglycan biosynthesis. In terms of biological role, cell wall formation. Catalyzes the transfer of a GlcNAc subunit on undecaprenyl-pyrophosphoryl-MurNAc-pentapeptide (lipid intermediate I) to form undecaprenyl-pyrophosphoryl-MurNAc-(pentapeptide)GlcNAc (lipid intermediate II). In Xanthomonas oryzae pv. oryzae (strain KACC10331 / KXO85), this protein is UDP-N-acetylglucosamine--N-acetylmuramyl-(pentapeptide) pyrophosphoryl-undecaprenol N-acetylglucosamine transferase.